We begin with the raw amino-acid sequence, 183 residues long: Ferritin light chain 1 (183 aa).

The region spanning Gln-7–Ala-156 is the Ferritin-like diiron domain. Fe cation is bound by residues Glu-54, Glu-57, Glu-58, Glu-61, and Glu-64.

The protein belongs to the ferritin family. As to quaternary structure, oligomer of 24 subunits. There are two types of subunits: L (light) chain and H (heavy) chain. The major chain can be light or heavy, depending on the species and tissue type. The functional molecule forms a roughly spherical shell with a diameter of 12 nm and contains a central cavity into which the insoluble mineral iron core is deposited. Interacts with NCOA4. As to expression, in rat liver, the light chain is the major chain.

It localises to the cytoplasmic vesicle. It is found in the autophagosome. The protein localises to the cytoplasm. Its subcellular location is the autolysosome. In terms of biological role, stores iron in a soluble, non-toxic, readily available form. Important for iron homeostasis. Iron is taken up in the ferrous form and deposited as ferric hydroxides after oxidation. Also plays a role in delivery of iron to cells. Mediates iron uptake in capsule cells of the developing kidney. Delivery to lysosomes by the cargo receptor NCOA4 for autophagic degradation and release or iron. In Rattus norvegicus (Rat), this protein is Ferritin light chain 1 (Ftl1).